Reading from the N-terminus, the 310-residue chain is MSKKIVLALGGNALGDDLAGQMKAVKITSQAIVDLIAQGHEVIVTHGNGPQVGMINQAFEAAAKTEAHSPMLPMSVCVALSQGYIGYDLQNALREELLSRGINKPVATLVTQVEVDANDPAFLNPTKPIGSFFTEQEAEQLTKQGYTLKEDAGRGYRRVVASPKPVDIIEKETVKALVDAGQVVITVGGGGIPVIREGNHLRGASAVIDKDWASARLAEMIDADMLIILTAVEKVAINFGKENEQWLDRLSLSDAERFIEEGHFAKGSMLPKVEAAASFARSRAGREALITVLSKAKEGIEGKTGTVICQ.

It belongs to the carbamate kinase family.

This chain is Carbamate kinase-like protein YqeA (yqeA), found in Escherichia coli (strain K12).